The following is a 252-amino-acid chain: Imidazole glycerol phosphate synthase subunit HisF (252 aa).

Active-site residues include aspartate 11 and aspartate 130.

The protein belongs to the HisA/HisF family. Heterodimer of HisH and HisF.

Its subcellular location is the cytoplasm. It carries out the reaction 5-[(5-phospho-1-deoxy-D-ribulos-1-ylimino)methylamino]-1-(5-phospho-beta-D-ribosyl)imidazole-4-carboxamide + L-glutamine = D-erythro-1-(imidazol-4-yl)glycerol 3-phosphate + 5-amino-1-(5-phospho-beta-D-ribosyl)imidazole-4-carboxamide + L-glutamate + H(+). It functions in the pathway amino-acid biosynthesis; L-histidine biosynthesis; L-histidine from 5-phospho-alpha-D-ribose 1-diphosphate: step 5/9. Its function is as follows. IGPS catalyzes the conversion of PRFAR and glutamine to IGP, AICAR and glutamate. The HisF subunit catalyzes the cyclization activity that produces IGP and AICAR from PRFAR using the ammonia provided by the HisH subunit. In Hydrogenobaculum sp. (strain Y04AAS1), this protein is Imidazole glycerol phosphate synthase subunit HisF.